A 173-amino-acid polypeptide reads, in one-letter code: Crossover junction endodeoxyribonuclease RuvC (173 aa).

Catalysis depends on residues Asp8, Glu69, and Asp141. Residues Asp8, Glu69, and Asp141 each contribute to the Mg(2+) site.

Belongs to the RuvC family. As to quaternary structure, homodimer which binds Holliday junction (HJ) DNA. The HJ becomes 2-fold symmetrical on binding to RuvC with unstacked arms; it has a different conformation from HJ DNA in complex with RuvA. In the full resolvosome a probable DNA-RuvA(4)-RuvB(12)-RuvC(2) complex forms which resolves the HJ. Mg(2+) serves as cofactor.

It is found in the cytoplasm. The enzyme catalyses Endonucleolytic cleavage at a junction such as a reciprocal single-stranded crossover between two homologous DNA duplexes (Holliday junction).. The RuvA-RuvB-RuvC complex processes Holliday junction (HJ) DNA during genetic recombination and DNA repair. Endonuclease that resolves HJ intermediates. Cleaves cruciform DNA by making single-stranded nicks across the HJ at symmetrical positions within the homologous arms, yielding a 5'-phosphate and a 3'-hydroxyl group; requires a central core of homology in the junction. The consensus cleavage sequence is 5'-(A/T)TT(C/G)-3'. Cleavage occurs on the 3'-side of the TT dinucleotide at the point of strand exchange. HJ branch migration catalyzed by RuvA-RuvB allows RuvC to scan DNA until it finds its consensus sequence, where it cleaves and resolves the cruciform DNA. The sequence is that of Crossover junction endodeoxyribonuclease RuvC from Stenotrophomonas maltophilia (strain K279a).